Consider the following 405-residue polypeptide: Probable tRNA sulfurtransferase (405 aa).

A THUMP domain is found at 60–165; sequence TAVMDRLKGV…LNGVFLSGQT (106 aa). Residues 183 to 184, 208 to 209, arginine 265, glycine 287, and glutamine 296 contribute to the ATP site; these read ML and HF.

The protein belongs to the ThiI family.

The protein localises to the cytoplasm. The enzyme catalyses [ThiI sulfur-carrier protein]-S-sulfanyl-L-cysteine + a uridine in tRNA + 2 reduced [2Fe-2S]-[ferredoxin] + ATP + H(+) = [ThiI sulfur-carrier protein]-L-cysteine + a 4-thiouridine in tRNA + 2 oxidized [2Fe-2S]-[ferredoxin] + AMP + diphosphate. It catalyses the reaction [ThiS sulfur-carrier protein]-C-terminal Gly-Gly-AMP + S-sulfanyl-L-cysteinyl-[cysteine desulfurase] + AH2 = [ThiS sulfur-carrier protein]-C-terminal-Gly-aminoethanethioate + L-cysteinyl-[cysteine desulfurase] + A + AMP + 2 H(+). It functions in the pathway cofactor biosynthesis; thiamine diphosphate biosynthesis. Functionally, catalyzes the ATP-dependent transfer of a sulfur to tRNA to produce 4-thiouridine in position 8 of tRNAs, which functions as a near-UV photosensor. Also catalyzes the transfer of sulfur to the sulfur carrier protein ThiS, forming ThiS-thiocarboxylate. This is a step in the synthesis of thiazole, in the thiamine biosynthesis pathway. The sulfur is donated as persulfide by IscS. In Levilactobacillus brevis (strain ATCC 367 / BCRC 12310 / CIP 105137 / JCM 1170 / LMG 11437 / NCIMB 947 / NCTC 947) (Lactobacillus brevis), this protein is Probable tRNA sulfurtransferase.